The chain runs to 435 residues: AP-2 complex subunit mu (435 aa).

Positions 170–434 (RNELFLDVLE…IGRSGIYETR (265 aa)) constitute an MHD domain. A 1,2-diacyl-sn-glycero-3-phospho-(1D-myo-inositol-3,4,5-trisphosphate)-binding residues include Lys-341, Lys-345, and Lys-354.

The protein belongs to the adaptor complexes medium subunit family. As to quaternary structure, adaptor protein complex 2 (AP-2) is a heterotetramer composed of two large adaptins (alpha-type subunit and beta-type subunit), a medium adaptin (mu-type subunit) and a small adaptin (sigma-type subunit).

Its subcellular location is the cell membrane. The protein localises to the membrane. It is found in the coated pit. Component of the adaptor complexes which link clathrin to receptors in coated vesicles. Clathrin-associated protein complexes are believed to interact with the cytoplasmic tails of membrane proteins, leading to their selection and concentration. AP50 is a subunit of the plasma membrane adaptor. The complex binds polyphosphoinositide-containing lipids. This Xenopus tropicalis (Western clawed frog) protein is AP-2 complex subunit mu (ap2m1).